The primary structure comprises 116 residues: Large ribosomal subunit protein bL19 (116 aa).

This sequence belongs to the bacterial ribosomal protein bL19 family.

Its function is as follows. This protein is located at the 30S-50S ribosomal subunit interface and may play a role in the structure and function of the aminoacyl-tRNA binding site. The chain is Large ribosomal subunit protein bL19 from Blochmanniella pennsylvanica (strain BPEN).